The sequence spans 326 residues: Protein BugT (326 aa).

An N-terminal signal peptide occupies residues 1–25 (MNMTRLLAVIGIFIATAGIAAPVSA).

The protein belongs to the UPF0065 (bug) family.

The protein localises to the periplasm. The polypeptide is Protein BugT (bugT) (Bordetella pertussis (strain Tohama I / ATCC BAA-589 / NCTC 13251)).